Consider the following 864-residue polypeptide: Ribosome biogenesis protein ERB1 (864 aa).

Over residues 1-52 the composition is skewed to basic and acidic residues; sequence MAVDKGRRPVPPERRAQGRKRAEPGDVTIRETRTRPVHTPEPEPELLAKDGI. Disordered regions lie at residues 1–153 and 191–231; these read MAVD…VKEG and ESRN…STED. A compositionally biased stretch (acidic residues) spans 53 to 71; it reads LELEDDDDNDDDDDDDDDD. Residues 72–83 are compositionally biased toward basic and acidic residues; sequence KSNHHDGAPKNE. Positions 100-135 are enriched in acidic residues; that stretch reads DDGDEDEEEDDEDEDEDASDDEAFDSDDLENWDEEA. WD repeat units lie at residues 509 to 549, 559 to 599, 694 to 732, 735 to 774, 778 to 817, and 833 to 864; these read AHAP…CVAT, ADRS…KTMY, NSAMAVQCVCFHPSRPWLFVATQRYVRVYDLVQQSLVKT, PGVRWISSLDVHPSGDHVIIGSYDRRVLWFDLDLSERPYK, YHSRAVRAVAYHPRFPLFASAADDGTVHVYHGTVYSDLLQ, and QDALGVLSIAWHPTLPWLVSAGADGDARLWTP.

It belongs to the WD repeat BOP1/ERB1 family. As to quaternary structure, component of the NOP7 complex, composed of ERB1, NOP7 and YTM1. The complex is held together by ERB1, which interacts with NOP7 via its N-terminal domain and with YTM1 via a high-affinity interaction between the seven-bladed beta-propeller domains of the 2 proteins. The NOP7 complex associates with the 66S pre-ribosome.

Its subcellular location is the nucleus. The protein localises to the nucleolus. It localises to the nucleoplasm. Its function is as follows. Component of the NOP7 complex, which is required for maturation of the 25S and 5.8S ribosomal RNAs and formation of the 60S ribosome. The sequence is that of Ribosome biogenesis protein ERB1 from Malassezia globosa (strain ATCC MYA-4612 / CBS 7966) (Dandruff-associated fungus).